A 464-amino-acid polypeptide reads, in one-letter code: Protein transport protein HofB homolog (464 aa).

Residue 264–271 (GPTGSGKS) participates in ATP binding.

It belongs to the GSP E family.

The protein is Protein transport protein HofB homolog (hofB) of Haemophilus influenzae (strain ATCC 51907 / DSM 11121 / KW20 / Rd).